The sequence spans 450 residues: Phosphoglucosamine mutase (450 aa).

Serine 101 acts as the Phosphoserine intermediate in catalysis. Positions 101, 242, 244, and 246 each coordinate Mg(2+). Serine 101 carries the phosphoserine modification.

It belongs to the phosphohexose mutase family. Mg(2+) serves as cofactor. In terms of processing, activated by phosphorylation.

The enzyme catalyses alpha-D-glucosamine 1-phosphate = D-glucosamine 6-phosphate. Functionally, catalyzes the conversion of glucosamine-6-phosphate to glucosamine-1-phosphate. The chain is Phosphoglucosamine mutase from Rhodopseudomonas palustris (strain TIE-1).